We begin with the raw amino-acid sequence, 118 residues long: Large ribosomal subunit protein bL19 (118 aa).

This sequence belongs to the bacterial ribosomal protein bL19 family.

Functionally, this protein is located at the 30S-50S ribosomal subunit interface and may play a role in the structure and function of the aminoacyl-tRNA binding site. The polypeptide is Large ribosomal subunit protein bL19 (rplS) (Helicobacter pylori (strain J99 / ATCC 700824) (Campylobacter pylori J99)).